A 304-amino-acid polypeptide reads, in one-letter code: Acetyl-coenzyme A carboxylase carboxyl transferase subunit beta (304 aa).

The interval 16-42 (SSLPPKNSEGGLAYFDEPSPEQESTRK) is disordered. Residues 48-304 (LWVKCPKCGE…LLRYHQEGAV (257 aa)) enclose the CoA carboxyltransferase N-terminal domain. The Zn(2+) site is built by cysteine 52, cysteine 55, cysteine 71, and cysteine 74. A C4-type zinc finger spans residues 52–74 (CPKCGEALFNKDLVENQRVCLTC).

This sequence belongs to the AccD/PCCB family. As to quaternary structure, acetyl-CoA carboxylase is a heterohexamer composed of biotin carboxyl carrier protein (AccB), biotin carboxylase (AccC) and two subunits each of ACCase subunit alpha (AccA) and ACCase subunit beta (AccD). It depends on Zn(2+) as a cofactor.

It localises to the cytoplasm. It carries out the reaction N(6)-carboxybiotinyl-L-lysyl-[protein] + acetyl-CoA = N(6)-biotinyl-L-lysyl-[protein] + malonyl-CoA. It functions in the pathway lipid metabolism; malonyl-CoA biosynthesis; malonyl-CoA from acetyl-CoA: step 1/1. Its function is as follows. Component of the acetyl coenzyme A carboxylase (ACC) complex. Biotin carboxylase (BC) catalyzes the carboxylation of biotin on its carrier protein (BCCP) and then the CO(2) group is transferred by the transcarboxylase to acetyl-CoA to form malonyl-CoA. The protein is Acetyl-coenzyme A carboxylase carboxyl transferase subunit beta of Desulfitobacterium hafniense (strain Y51).